The sequence spans 6061 residues: Intermembrane lipid transfer protein vps13B (6061 aa).

The Chorein N-terminal domain maps to 2–115 (FESLVADIIA…QLELKRKKLE (114 aa)). 17 disordered regions span residues 590 to 623 (PKYK…NNNK), 803 to 828 (DIKN…NNKN), 1386 to 1414 (QQQQ…NVSS), 1604 to 1644 (SSNN…GTLS), 2747 to 2784 (QTNQ…EDQE), 2950 to 2972 (GLNN…NSST), 3364 to 3401 (LNRN…DDDD), 3855 to 3876 (QQQQ…RNKK), 4011 to 4068 (QQQQ…FKNN), 4107 to 4132 (ELEK…RPDE), 4262 to 4297 (NSSN…YNGR), 4321 to 4442 (SQSI…TSPG), 4601 to 4631 (TSSP…KKSL), 4753 to 4797 (NNNN…TQEF), 4861 to 4882 (NAGG…SISQ), 5003 to 5030 (LATK…DGIE), and 5372 to 5429 (NINN…IGQD). Residues 595–614 (HQENKENKENQENQENENKN) show a composition bias toward basic and acidic residues. A compositionally biased stretch (basic and acidic residues) spans 1395-1406 (QQQKEEEQHGGE). The segment covering 2747–2756 (QTNQNNQKNR) has biased composition (polar residues). A compositionally biased stretch (acidic residues) spans 2774–2784 (NDNDEYDEDQE). The span at 3388-3401 (IDDDDGDGDDDDDD) shows a compositional bias: acidic residues. Basic and acidic residues predominate over residues 4015–4024 (QEKEKEIEKE). A compositionally biased stretch (low complexity) spans 4031 to 4040 (LKNNNNISIN). Residues 4041 to 4057 (DNDDDDDDDDNDNDENN) are compositionally biased toward acidic residues. Residues 4058–4068 (NENYEFNFKNN) show a composition bias toward low complexity. The segment covering 4107-4120 (ELEKKKRERKENSK) has biased composition (basic and acidic residues). 2 stretches are compositionally biased toward low complexity: residues 4330 to 4383 (TTTT…VGSN) and 4399 to 4429 (NNNN…NNNN). Over residues 4430 to 4441 (SNDNQVNFSTSP) the composition is skewed to polar residues. 2 stretches are compositionally biased toward low complexity: residues 4601 to 4617 (TSSP…NYNN) and 4753 to 4784 (NNNN…SNEN). The segment covering 4785-4794 (SQDQPPSIKT) has biased composition (polar residues). Low complexity-rich tracts occupy residues 5013–5030 (DNSN…DGIE) and 5372–5384 (NINN…NNDN). Residues 5385 to 5409 (NKNKNNNDKNKNNDKNNKNNNDKNN) are compositionally biased toward basic and acidic residues. Over residues 5410 to 5421 (NDNNNNNNNNNN) the composition is skewed to low complexity.

This sequence belongs to the VPS13 family.

It localises to the membrane. Its function is as follows. Mediates the transfer of lipids between membranes at organelle contact sites. This is Intermembrane lipid transfer protein vps13B (vps13B) from Dictyostelium discoideum (Social amoeba).